Reading from the N-terminus, the 458-residue chain is Tissue-resident T-cell transcription regulator protein ZNF683 (458 aa).

Disordered regions lie at residues 84–109 and 249–275; these read PQDL…TDSE and TLHS…APTR. C2H2-type zinc fingers lie at residues 301 to 323, 329 to 351, and 357 to 379; these read YECN…LRVH, FQCA…HLVH, and HQCQ…LRLH.

The protein belongs to the krueppel C2H2-type zinc-finger protein family. As to expression, expressed in tissue-resident memory T (Trm) cell population in non-lymphoid organs, such as skin and gut. Expressed in innate lymphocytes, including tissue-resident natural killer (trNK) and natural killer T (NKT) cells in thymus, spleen and liver.

The protein localises to the nucleus. Transcription factor that mediates a transcriptional program in various innate and adaptive immune tissue-resident lymphocyte T-cell types such as tissue-resident memory T (Trm), natural killer (trNK) and natural killer T (NKT) cells and negatively regulates gene expression of proteins that promote the egress of tissue-resident T-cell populations from non-lymphoid organs. Plays a role in the development, retention and long-term establishment of adaptive and innate tissue-resident lymphocyte T-cell types in non-lymphoid organs, such as the skin and gut, but also in other nonbarrier tissues like liver and kidney, and therefore may provide immediate immunological protection against reactivating infections or viral reinfection. Also plays a role in the differentiation of both thymic and peripheral NKT cells. Negatively regulates the accumulation of interferon-gamma (IFN-gamma) in NKT cells at steady state or after antigenic stimulation. Positively regulates granzyme B production in NKT cells after innate stimulation. Associates with the transcriptional repressor PRDM1/BLIMP1 to chromatin at gene promoter regions. The sequence is that of Tissue-resident T-cell transcription regulator protein ZNF683 from Mus musculus (Mouse).